A 364-amino-acid polypeptide reads, in one-letter code: Protein leg1a (364 aa).

A signal peptide spans 1–22 (MSEMGFLRSVAAVLLLAVFSHA). N-linked (GlcNAc...) asparagine glycosylation occurs at N70.

This sequence belongs to the LEG1 family. As to expression, detected in all tissues tested, with the highest levels in serum (at protein level). At mRNA level, only expressed in liver.

The protein localises to the secreted. In terms of biological role, important for early development of liver, exocrine pancreas and intestine, probably through cell cycle regulation. In liver, its function is partially redundant with leg1b function. The sequence is that of Protein leg1a from Danio rerio (Zebrafish).